Reading from the N-terminus, the 348-residue chain is Phosphoribosylformylglycinamidine cyclo-ligase (348 aa).

Belongs to the AIR synthase family.

The protein localises to the cytoplasm. It carries out the reaction 2-formamido-N(1)-(5-O-phospho-beta-D-ribosyl)acetamidine + ATP = 5-amino-1-(5-phospho-beta-D-ribosyl)imidazole + ADP + phosphate + H(+). It functions in the pathway purine metabolism; IMP biosynthesis via de novo pathway; 5-amino-1-(5-phospho-D-ribosyl)imidazole from N(2)-formyl-N(1)-(5-phospho-D-ribosyl)glycinamide: step 2/2. This is Phosphoribosylformylglycinamidine cyclo-ligase from Cereibacter sphaeroides (strain KD131 / KCTC 12085) (Rhodobacter sphaeroides).